We begin with the raw amino-acid sequence, 334 residues long: Galactosylgalactosylxylosylprotein 3-beta-glucuronosyltransferase 1 (334 aa).

Over 1-6 the chain is Cytoplasmic; sequence MPKRRD. An essential for transport from endoplasmic reticulum to Golgi apparatus and interaction with SAR1A region spans residues 3–5; that stretch reads KRR. A helical; Signal-anchor for type II membrane protein transmembrane segment spans residues 7–27; it reads ILAIVLIVLPWTLLITVWHQS. Residues 28 to 334 are Lumenal-facing; that stretch reads SLAPLLAVHK…KGFTDPSVEI (307 aa). 91 to 93 contacts UDP-alpha-D-glucuronate; the sequence is PTY. 2 positions are modified to phosphothreonine: T103 and T108. Residue D122 participates in UDP-alpha-D-glucuronate binding. N140 is a glycosylation site (N-linked (GlcNAc...) asparagine). The UDP-alpha-D-glucuronate site is built by R165 and R170. N-linked (GlcNAc...) asparagine glycosylation is present at N184. A UDP-alpha-D-glucuronate-binding site is contributed by 195–197; that stretch reads DDD. D197 serves as a coordination point for Mn(2+). Positions 245–254 are interaction with galactose moiety of substrate glycoprotein; it reads FDPHRPFAID. The active-site Proton donor/acceptor is E284. N303 carries an N-linked (GlcNAc...) asparagine glycan. 311–313 provides a ligand contact to UDP-alpha-D-glucuronate; it reads HTR.

This sequence belongs to the glycosyltransferase 43 family. As to quaternary structure, homodimer. Interacts with SAR1A. It depends on Mn(2+) as a cofactor. The soluble form derives from the membrane form by proteolytic processing.

It is found in the golgi apparatus membrane. Its subcellular location is the secreted. It localises to the endoplasmic reticulum membrane. It catalyses the reaction 3-O-(beta-D-galactosyl-(1-&gt;3)-beta-D-galactosyl-(1-&gt;4)-beta-D-xylosyl)-L-seryl-[protein] + UDP-alpha-D-glucuronate = 3-O-(beta-D-GlcA-(1-&gt;3)-beta-D-Gal-(1-&gt;3)-beta-D-Gal-(1-&gt;4)-beta-D-Xyl)-L-seryl-[protein] + UDP + H(+). The protein operates within protein modification; protein glycosylation. In terms of biological role, involved in the biosynthesis of L2/HNK-1 carbohydrate epitope on glycoproteins. Can also play a role in glycosaminoglycan biosynthesis. Substrates include asialo-orosomucoid (ASOR), asialo-fetuin, and asialo-neural cell adhesion molecule. Requires sphingomyelin for activity: stearoyl-sphingomyelin was the most effective, followed by palmitoyl-sphingomyelin and lignoceroyl-sphingomyelin. Activity was demonstrated only for sphingomyelin with a saturated fatty acid and not for that with an unsaturated fatty acid, regardless of the length of the acyl group. The polypeptide is Galactosylgalactosylxylosylprotein 3-beta-glucuronosyltransferase 1 (Mus musculus (Mouse)).